Here is a 355-residue protein sequence, read N- to C-terminus: Probable butyrate kinase (355 aa).

It belongs to the acetokinase family.

It localises to the cytoplasm. The catalysed reaction is butanoate + ATP = butanoyl phosphate + ADP. This is Probable butyrate kinase from Listeria innocua serovar 6a (strain ATCC BAA-680 / CLIP 11262).